Reading from the N-terminus, the 112-residue chain is Cell cycle protein GpsB (112 aa).

The stretch at 42–77 forms a coiled coil; sequence YQKMADMNNEVVKLSEENNKLKKEVEELRLRVATSR. The interval 75–97 is disordered; it reads TSRPSDNKSFSSNNSSSSNNNVD. Residues 81–95 show a composition bias toward low complexity; the sequence is NKSFSSNNSSSSNNN.

Belongs to the GpsB family. In terms of assembly, forms polymers through the coiled coil domains. Interacts with PBP1, MreC and EzrA.

It localises to the cytoplasm. In terms of biological role, divisome component that associates with the complex late in its assembly, after the Z-ring is formed, and is dependent on DivIC and PBP2B for its recruitment to the divisome. Together with EzrA, is a key component of the system that regulates PBP1 localization during cell cycle progression. Its main role could be the removal of PBP1 from the cell pole after pole maturation is completed. Also contributes to the recruitment of PBP1 to the division complex. Not essential for septum formation. The sequence is that of Cell cycle protein GpsB from Staphylococcus haemolyticus (strain JCSC1435).